We begin with the raw amino-acid sequence, 146 residues long: Ribonuclease H (146 aa).

An RNase H type-1 domain is found at 1–141; that stretch reads MEKIDIFTDG…ADALANRGVE (141 aa). Aspartate 9, glutamate 47, aspartate 69, and aspartate 133 together coordinate Mg(2+).

The protein belongs to the RNase H family. As to quaternary structure, monomer. The cofactor is Mg(2+).

The protein localises to the cytoplasm. The catalysed reaction is Endonucleolytic cleavage to 5'-phosphomonoester.. In terms of biological role, endonuclease that specifically degrades the RNA of RNA-DNA hybrids. The protein is Ribonuclease H of Herminiimonas arsenicoxydans.